A 287-amino-acid chain; its full sequence is Polyamine aminopropyltransferase (287 aa).

One can recognise a PABS domain in the interval Glu-5–Gln-238. Residue Gln-33 coordinates S-methyl-5'-thioadenosine. The spermidine site is built by His-64 and Asp-88. S-methyl-5'-thioadenosine is bound by residues Glu-108 and Asp-140–Gly-141. Catalysis depends on Asp-158, which acts as the Proton acceptor. Asp-158–Asp-161 serves as a coordination point for spermidine. Position 165 (Pro-165) interacts with S-methyl-5'-thioadenosine.

The protein belongs to the spermidine/spermine synthase family. Homodimer or homotetramer.

It is found in the cytoplasm. It carries out the reaction S-adenosyl 3-(methylsulfanyl)propylamine + putrescine = S-methyl-5'-thioadenosine + spermidine + H(+). Its pathway is amine and polyamine biosynthesis; spermidine biosynthesis; spermidine from putrescine: step 1/1. Functionally, catalyzes the irreversible transfer of a propylamine group from the amino donor S-adenosylmethioninamine (decarboxy-AdoMet) to putrescine (1,4-diaminobutane) to yield spermidine. In Sodalis glossinidius (strain morsitans), this protein is Polyamine aminopropyltransferase.